Consider the following 320-residue polypeptide: ATP-dependent 6-phosphofructokinase (320 aa).

Gly11 is a binding site for ATP. Residue 21–25 coordinates ADP; that stretch reads RAIAR. Residues 72–73 and 102–105 each bind ATP; these read RF and GDGS. Asp103 is a binding site for Mg(2+). Substrate contacts are provided by residues 125–127, Arg162, and 169–171; these read TID and MGR. Residue Asp127 is the Proton acceptor of the active site. ADP contacts are provided by residues 185–187 and 213–215; these read GAD and KDH. Substrate-binding positions include Glu222, Arg243, and 249-252; that span reads HIQR.

The protein belongs to the phosphofructokinase type A (PFKA) family. ATP-dependent PFK group I subfamily. Prokaryotic clade 'B1' sub-subfamily. Homotetramer. The cofactor is Mg(2+).

The protein localises to the cytoplasm. The enzyme catalyses beta-D-fructose 6-phosphate + ATP = beta-D-fructose 1,6-bisphosphate + ADP + H(+). Its pathway is carbohydrate degradation; glycolysis; D-glyceraldehyde 3-phosphate and glycerone phosphate from D-glucose: step 3/4. With respect to regulation, allosterically activated by ADP and other diphosphonucleosides, and allosterically inhibited by phosphoenolpyruvate. Its function is as follows. Catalyzes the phosphorylation of D-fructose 6-phosphate to fructose 1,6-bisphosphate by ATP, the first committing step of glycolysis. This is ATP-dependent 6-phosphofructokinase from Ligilactobacillus salivarius (strain UCC118) (Lactobacillus salivarius).